A 43-amino-acid chain; its full sequence is Potassium channel toxin gamma-KTx 3.2 (43 aa).

4 disulfides stabilise this stretch: C5–C23, C11–C34, C20–C39, and C24–C41.

Belongs to the ergtoxin family. Gamma-KTx 3 subfamily. Expressed by the venom gland.

Its subcellular location is the secreted. Blocks Kv11/ERG potassium channels. The polypeptide is Potassium channel toxin gamma-KTx 3.2 (Centruroides elegans (Bark scorpion)).